Reading from the N-terminus, the 485-residue chain is Glucagon receptor (485 aa).

The signal sequence occupies residues 1 to 26 (MLLTQLHCPYLLLLLVVLSCLPKAPS). Residues 27 to 137 (AQVMDFLFEK…EIEVQKGVAK (111 aa)) are Extracellular-facing. Disulfide bonds link C44-C68, C59-C101, and C82-C122. N-linked (GlcNAc...) asparagine glycosylation is found at N47, N60, N75, and N79. A helical membrane pass occupies residues 138-162 (MYSSYQVMYTVGYSLSLGALLLALV). Residues 163–174 (ILLGLRKLHCTR) are Cytoplasmic-facing. A helical membrane pass occupies residues 175-199 (NYIHGNLFASFVLKAGSVLVIDWLL). Topologically, residues 200 to 226 (KTRYSQKIGDDLSVSVWLSDGAVAGCR) are extracellular. A disulfide bridge connects residues C225 and C295. The chain crosses the membrane as a helical span at residues 227-250 (VATVIMQYGIIANYCWLLVEGVYL). At 251–264 (YSLLSITTFSEKSF) the chain is on the cytoplasmic side. Residues 265–286 (FSLYLCIGWGSPLLFVIPWVVV) traverse the membrane as a helical segment. The Extracellular segment spans residues 287 to 304 (KCLFENVQCWTSNDNMGF). A helical membrane pass occupies residues 305–327 (WWILRIPVLLAILINFFIFVRII). The Cytoplasmic segment spans residues 328–351 (HLLVAKLRAHQMHYADYKFRLARS). The important for allosteric inhibitor binding stretch occupies residues 351–354 (STLT). Residues 352 to 370 (TLTLIPLLGVHEVVFAFVT) form a helical membrane-spanning segment. The Extracellular segment spans residues 371-382 (DEHAQGTLRSTK). Residues 383-403 (LFFDLFFSSFQGLLVAVLYCF) traverse the membrane as a helical segment. Residues 404-485 (LNKEVQAELL…SLPRLADSPT (82 aa)) are Cytoplasmic-facing. Positions 455 to 485 (MSAGSSSGTGCEPSAKTSLASSLPRLADSPT) are disordered. The span at 456-475 (SAGSSSGTGCEPSAKTSLAS) shows a compositional bias: polar residues. Residues S460 and S476 each carry the phosphoserine modification.

This sequence belongs to the G-protein coupled receptor 2 family. Post-translationally, ligand-binding promotes phosphorylation of serine residues in the C-terminal cytoplasmic domain. Phosphorylation is important for receptor endocytosis after ligand-binding.

Its subcellular location is the cell membrane. Functionally, G-protein coupled receptor for glucagon that plays a central role in the regulation of blood glucose levels and glucose homeostasis. Regulates the rate of hepatic glucose production by promoting glycogen hydrolysis and gluconeogenesis. Plays an important role in mediating the responses to fasting. Ligand binding causes a conformation change that triggers signaling via guanine nucleotide-binding proteins (G proteins) and modulates the activity of down-stream effectors, such as adenylate cyclase. Promotes activation of adenylate cyclase. Besides, plays a role in signaling via a phosphatidylinositol-calcium second messenger system. This chain is Glucagon receptor (Gcgr), found in Rattus norvegicus (Rat).